The primary structure comprises 196 residues: uncharacterized protein (196 aa).

Residues 7-67 enclose the HTH tetR-type domain; that stretch reads RNTKEKILTA…AVIDNHVKIW (61 aa). The segment at residues 30 to 49 is a DNA-binding region (H-T-H motif); sequence SINDILDETATGKGQFYYYF.

This is an uncharacterized protein from Lactococcus lactis subsp. lactis (Streptococcus lactis).